The chain runs to 197 residues: Dephospho-CoA kinase (197 aa).

One can recognise a DPCK domain in the interval 3 to 197 (VLGLTGSIGL…IDELRGQRGS (195 aa)). Residue 11–16 (GLGKST) participates in ATP binding.

This sequence belongs to the CoaE family.

Its subcellular location is the cytoplasm. It catalyses the reaction 3'-dephospho-CoA + ATP = ADP + CoA + H(+). It participates in cofactor biosynthesis; coenzyme A biosynthesis; CoA from (R)-pantothenate: step 5/5. Its function is as follows. Catalyzes the phosphorylation of the 3'-hydroxyl group of dephosphocoenzyme A to form coenzyme A. The polypeptide is Dephospho-CoA kinase (Mesorhizobium japonicum (strain LMG 29417 / CECT 9101 / MAFF 303099) (Mesorhizobium loti (strain MAFF 303099))).